A 176-amino-acid polypeptide reads, in one-letter code: Neuropeptide-like protein 1 (176 aa).

The signal sequence occupies residues M1–A19. Residues G59–K79 form a disordered region. Residues R61–K79 show a composition bias toward basic and acidic residues.

In terms of biological role, in AWC olfactory sensory neurons, required for the detection of preferred food sources. The chain is Neuropeptide-like protein 1 (nlp-1) from Caenorhabditis elegans.